A 147-amino-acid chain; its full sequence is MKIIIQRVNQASVSIEDDVVGSIEKGLVLLVGIAPEDTTEDIAYAVRKITSMRIFSDDEGRMNLSIQDIKGSVLSISQFTLFADTKKGNRPAFTGAADPVKANQFYDIFNQELANHVSVETGQFGADMQVSLINDGPVTIVLDTKNK.

The short motif at 136-137 (GP) is the Gly-cisPro motif, important for rejection of L-amino acids element.

This sequence belongs to the DTD family. In terms of assembly, homodimer.

The protein localises to the cytoplasm. The catalysed reaction is glycyl-tRNA(Ala) + H2O = tRNA(Ala) + glycine + H(+). The enzyme catalyses a D-aminoacyl-tRNA + H2O = a tRNA + a D-alpha-amino acid + H(+). Functionally, an aminoacyl-tRNA editing enzyme that deacylates mischarged D-aminoacyl-tRNAs. Also deacylates mischarged glycyl-tRNA(Ala), protecting cells against glycine mischarging by AlaRS. Acts via tRNA-based rather than protein-based catalysis; rejects L-amino acids rather than detecting D-amino acids in the active site. By recycling D-aminoacyl-tRNA to D-amino acids and free tRNA molecules, this enzyme counteracts the toxicity associated with the formation of D-aminoacyl-tRNA entities in vivo and helps enforce protein L-homochirality. The chain is D-aminoacyl-tRNA deacylase from Streptococcus agalactiae serotype Ia (strain ATCC 27591 / A909 / CDC SS700).